The following is a 65-amino-acid chain: Large ribosomal subunit protein bL35 (65 aa).

A compositionally biased stretch (basic residues) spans 1–11 (MPKIKTRRSAA). 2 disordered regions span residues 1 to 24 (MPKIKTRRSAAKRFSVTGSGKFKR) and 41 to 65 (RMRLGQSATVDSTNEKAVRRMMPYA).

The protein belongs to the bacterial ribosomal protein bL35 family.

The chain is Large ribosomal subunit protein bL35 from Nitratidesulfovibrio vulgaris (strain DSM 19637 / Miyazaki F) (Desulfovibrio vulgaris).